A 118-amino-acid polypeptide reads, in one-letter code: Large ribosomal subunit protein bL19 (118 aa).

It belongs to the bacterial ribosomal protein bL19 family.

Functionally, this protein is located at the 30S-50S ribosomal subunit interface and may play a role in the structure and function of the aminoacyl-tRNA binding site. The protein is Large ribosomal subunit protein bL19 of Dictyoglomus thermophilum (strain ATCC 35947 / DSM 3960 / H-6-12).